The chain runs to 253 residues: Adenosylcobinamide-GDP ribazoletransferase (253 aa).

The next 7 membrane-spanning stretches (helical) occupy residues 33–53 (ISPL…YVLL), 56–76 (ILEA…RGFN), 106–126 (IGSG…VALL), 132–152 (FYTI…GLYI), 178–198 (VLLF…FLVF), 209–229 (LGGS…PLFL), and 233–253 (EITN…LYLH).

This sequence belongs to the CobS family. It depends on Mg(2+) as a cofactor.

It localises to the cell membrane. It catalyses the reaction alpha-ribazole + adenosylcob(III)inamide-GDP = adenosylcob(III)alamin + GMP + H(+). The enzyme catalyses alpha-ribazole 5'-phosphate + adenosylcob(III)inamide-GDP = adenosylcob(III)alamin 5'-phosphate + GMP + H(+). It functions in the pathway cofactor biosynthesis; adenosylcobalamin biosynthesis; adenosylcobalamin from cob(II)yrinate a,c-diamide: step 7/7. Joins adenosylcobinamide-GDP and alpha-ribazole to generate adenosylcobalamin (Ado-cobalamin). Also synthesizes adenosylcobalamin 5'-phosphate from adenosylcobinamide-GDP and alpha-ribazole 5'-phosphate. The polypeptide is Adenosylcobinamide-GDP ribazoletransferase (Saccharolobus islandicus (strain M.16.27) (Sulfolobus islandicus)).